The primary structure comprises 213 residues: MRIFIDSANIEEIKEINGMGFLAGVTTNPSLVAKEKKDYKGLIREISMLVDGPISAEVIALDYQAMVQEGEELASIHPNVVIKIPLCEEGLKAIHALKQKGIATNATLVFSANQALLAARAGASYVSPFIGRVDDTGNDGLTLLDDIVQIFDQYMVETEVIAASIRHPMHVVASAKIGSNIATIPYQVIKQMVKHPLSDAGIEKFMSDWKKAF.

K83 (schiff-base intermediate with substrate) is an active-site residue.

Belongs to the transaldolase family. Type 3B subfamily.

The protein localises to the cytoplasm. The enzyme catalyses D-sedoheptulose 7-phosphate + D-glyceraldehyde 3-phosphate = D-erythrose 4-phosphate + beta-D-fructose 6-phosphate. It participates in carbohydrate degradation; pentose phosphate pathway; D-glyceraldehyde 3-phosphate and beta-D-fructose 6-phosphate from D-ribose 5-phosphate and D-xylulose 5-phosphate (non-oxidative stage): step 2/3. Functionally, transaldolase is important for the balance of metabolites in the pentose-phosphate pathway. In Syntrophomonas wolfei subsp. wolfei (strain DSM 2245B / Goettingen), this protein is Probable transaldolase.